We begin with the raw amino-acid sequence, 85 residues long: Translation initiation factor IF-1 (85 aa).

In terms of domain architecture, S1-like spans 1 to 72; it reads MAKEELIEMH…SKGRITFRHI (72 aa).

Belongs to the IF-1 family. In terms of assembly, component of the 30S ribosomal translation pre-initiation complex which assembles on the 30S ribosome in the order IF-2 and IF-3, IF-1 and N-formylmethionyl-tRNA(fMet); mRNA recruitment can occur at any time during PIC assembly.

The protein localises to the cytoplasm. One of the essential components for the initiation of protein synthesis. Stabilizes the binding of IF-2 and IF-3 on the 30S subunit to which N-formylmethionyl-tRNA(fMet) subsequently binds. Helps modulate mRNA selection, yielding the 30S pre-initiation complex (PIC). Upon addition of the 50S ribosomal subunit IF-1, IF-2 and IF-3 are released leaving the mature 70S translation initiation complex. The chain is Translation initiation factor IF-1 from Polaromonas naphthalenivorans (strain CJ2).